The primary structure comprises 274 residues: Protein STAY-GREEN, chloroplastic (274 aa).

Residues 1–48 (MAAATSTMSLIPPITQQQRWHAADSLVVLASRRHDSRRRRRCRYVVPR) constitute a chloroplast transit peptide.

Belongs to the staygreen family.

Its subcellular location is the plastid. The protein resides in the chloroplast. Its function is as follows. Involved in the disassembling mechanism of the intact light-harvesting complex of photosystem II (LHCPII) in the thylakoid membranes. Required to trigger chlorophyll degradation during natural and dark-induced leaf senescence. This is Protein STAY-GREEN, chloroplastic (SGR) from Oryza sativa subsp. indica (Rice).